The following is a 177-amino-acid chain: ECF RNA polymerase sigma factor SigL (177 aa).

Residues 18–85 (LYDEHAAVLW…MIIDERRSAR (68 aa)) are sigma-70 factor domain-2. Positions 42-45 (DVVQ) match the Interaction with polymerase core subunit RpoC motif. The tract at residues 119 to 167 (ALAQLSAEHRAVIQRSYYRGWSTAQIATDLGIAEGTVKSRLHYAVRALR) is sigma-70 factor domain-4. The segment at residues 141–160 (TAQIATDLGIAEGTVKSRLH) is a DNA-binding region (H-T-H motif).

Belongs to the sigma-70 factor family. ECF subfamily. In terms of assembly, interacts transiently with the RNA polymerase catalytic core formed by RpoA, RpoB, RpoC and RpoZ (2 alpha, 1 beta, 1 beta' and 1 omega subunit) to form the RNA polymerase holoenzyme that can initiate transcription. Interacts (via sigma-70 factor domain 4) with anti-sigma-L factor RslA.

Sigma factors are initiation factors that promote the attachment of RNA polymerase to specific initiation sites and are then released. Extracytoplasmic function (ECF) sigma factors are held in an inactive form by an anti-sigma factor until released by regulated intramembrane proteolysis. This chain is ECF RNA polymerase sigma factor SigL (sigL), found in Mycobacterium tuberculosis (strain ATCC 35801 / TMC 107 / Erdman).